Reading from the N-terminus, the 147-residue chain is UPF0178 protein AFE_3267 (147 aa).

The protein belongs to the UPF0178 family.

In Acidithiobacillus ferrooxidans (strain ATCC 23270 / DSM 14882 / CIP 104768 / NCIMB 8455) (Ferrobacillus ferrooxidans (strain ATCC 23270)), this protein is UPF0178 protein AFE_3267.